Reading from the N-terminus, the 779-residue chain is Phosphoribosylformylglycinamidine synthase subunit PurL (779 aa).

His-52 is an active-site residue. ATP is bound by residues Tyr-55 and Lys-94. Glu-96 contributes to the Mg(2+) binding site. Substrate contacts are provided by residues 97–100 (SHNH) and Arg-119. Residue His-98 is the Proton acceptor of the active site. Asp-120 contributes to the Mg(2+) binding site. Gln-243 serves as a coordination point for substrate. Position 271 (Asp-271) interacts with Mg(2+). Residue 315–317 (ESQ) participates in substrate binding. The ATP site is built by Asn-523 and Gly-560. Asn-561 contributes to the Mg(2+) binding site. Ser-563 serves as a coordination point for substrate.

It belongs to the FGAMS family. Monomer. Part of the FGAM synthase complex composed of 1 PurL, 1 PurQ and 2 PurS subunits.

The protein resides in the cytoplasm. The catalysed reaction is N(2)-formyl-N(1)-(5-phospho-beta-D-ribosyl)glycinamide + L-glutamine + ATP + H2O = 2-formamido-N(1)-(5-O-phospho-beta-D-ribosyl)acetamidine + L-glutamate + ADP + phosphate + H(+). The protein operates within purine metabolism; IMP biosynthesis via de novo pathway; 5-amino-1-(5-phospho-D-ribosyl)imidazole from N(2)-formyl-N(1)-(5-phospho-D-ribosyl)glycinamide: step 1/2. Part of the phosphoribosylformylglycinamidine synthase complex involved in the purines biosynthetic pathway. Catalyzes the ATP-dependent conversion of formylglycinamide ribonucleotide (FGAR) and glutamine to yield formylglycinamidine ribonucleotide (FGAM) and glutamate. The FGAM synthase complex is composed of three subunits. PurQ produces an ammonia molecule by converting glutamine to glutamate. PurL transfers the ammonia molecule to FGAR to form FGAM in an ATP-dependent manner. PurS interacts with PurQ and PurL and is thought to assist in the transfer of the ammonia molecule from PurQ to PurL. The polypeptide is Phosphoribosylformylglycinamidine synthase subunit PurL (Prochlorococcus marinus (strain AS9601)).